Here is a 343-residue protein sequence, read N- to C-terminus: Protein RecA (343 aa).

66–73 lines the ATP pocket; sequence GPESSGKT.

The protein belongs to the RecA family.

It is found in the cytoplasm. In terms of biological role, can catalyze the hydrolysis of ATP in the presence of single-stranded DNA, the ATP-dependent uptake of single-stranded DNA by duplex DNA, and the ATP-dependent hybridization of homologous single-stranded DNAs. It interacts with LexA causing its activation and leading to its autocatalytic cleavage. In Nitrosomonas europaea (strain ATCC 19718 / CIP 103999 / KCTC 2705 / NBRC 14298), this protein is Protein RecA.